The following is a 52-amino-acid chain: Repressor-like protein SSo7c3 (52 aa).

Positions 4–51 (EEVVKVSRNYQVTIPAKVRQKFPVKEGDLVKVIYDENGGVVKIQILDS) constitute a SpoVT-AbrB domain.

This is Repressor-like protein SSo7c3 from Saccharolobus solfataricus (strain ATCC 35092 / DSM 1617 / JCM 11322 / P2) (Sulfolobus solfataricus).